The sequence spans 25 residues: Bombinin-like peptide 4 (25 aa).

Residue phenylalanine 25 is modified to Phenylalanine amide.

The protein belongs to the bombinin family. As to expression, expressed by the skin glands.

Its subcellular location is the secreted. In terms of biological role, has antimicrobial activity, but no hemolytic activity. Preference on killing Gram-negative non-enteric bacteria. The polypeptide is Bombinin-like peptide 4 (Bombina orientalis (Oriental fire-bellied toad)).